Reading from the N-terminus, the 95-residue chain is Small ribosomal subunit protein uS19 (95 aa).

The segment at 76-95 is disordered; the sequence is PTRRFGGHADKKAKKGELKK. Residues 82–95 are compositionally biased toward basic and acidic residues; that stretch reads GHADKKAKKGELKK.

It belongs to the universal ribosomal protein uS19 family.

In terms of biological role, protein S19 forms a complex with S13 that binds strongly to the 16S ribosomal RNA. The sequence is that of Small ribosomal subunit protein uS19 from Thermotoga neapolitana (strain ATCC 49049 / DSM 4359 / NBRC 107923 / NS-E).